A 2894-amino-acid polypeptide reads, in one-letter code: MKSYLKNISIFVFTILLLSNVSLGLNVSTTNNNSNFELNNSLIYKLNNSLTNTTNNSGSIIINNTTDTNKEKNECYLNITINGYRVIVKTNGEVFGFANKTPLKFIKIGDNEYIISPIVLNVPIEIYSKFNDKILHRTVILNYTKPEKEKKETNIKKEELHYLNVSFNNFKLIVKTNGKPYAKYLDLNIKVKTKKIKKHEYLVYPLILNKTIIIYAKFKNETLNRTIFLNYSIEENTTTNKTVILKNVYFPSEKIVIKTNFKPHTAYIVTPNNKIIHLKVHKKGKFYILSTKLKKNVILGNYSVVVDGIKKTFAVDYYKINAKLIDNRFIVGNVSYYVKEPKFITCIVDKKEINISLINGAFEIPLDYLIPKLNISKPEKIKKIILICGNAKEKIKVKFKNKEEIKKLISYDPVNKEIIIKLEGSEKEIKKLLKRYEKRKKYKISKIVKIYNYSIVEIKLKADKEILKDYNLPENILNTTEIVKKISSNKIRVEVNNKVDGVWYRFSCKIPKGYRVKEIVGDDGRVIRNNISINRLTGEVIGEVRWYIENNTLYFYDDPIYGYDISLIPPAPNHSIAVELSYNGQDYGGCGQISAIVFPYNKEDDETTVATYDHAGRTGDYNYANNIDAYAGSKIAIKYTSGALTRQYGVLGTAGSLGWWTYYYLSEINRTDIPLNTVPNGILESVIITDMYAPWNNNELNITQKVIIRGNNKWFATIYYIKNPTTKTYTNLKFFQGMDWNFRGSWWGDDAYYNSIDDVVYGYDSNAPVGDIQYGGFKSNIPSYEHDVNLYWSTWSDIRYDNLNNDSSYEGDAGTALAWTKDSLKPGEIWVVPIIWGLGYNYTDMMNEINMGLSQLYDTGVKSIDYPNNGDSFNPNIGPIIYINSTIALYGLVDAYNLNVSINITQINGTYIYTNSTLINLSVPYEEEKLVSFPVNISNMPYGAYNITIKTNLPNDQNTSNDEKSIIIYITSFSVQPNYQEKTGNVGEEIFYNITLYNFGVGGRFDINITYLTKGWTTKIYNNSILIAEDANGDGIWDYINPNYDLNSNNLPDIYVPTGEINLTVSKTIPSTAPLGEIDTTTLKFVNINNPSIFGKTTFQTSTPYPPSVQKTFYLHGDTLRTLNTSIPTTINNYTTINSNSLASWIQYPRFADNFTVVGKIPILLYINDPNVIFGTEMHKIVVSLMATNGIDSFTLGSDVEYLYLDDTIKSYIFNITLDSIITIPKNYYLVLRVENQISSNSINIYHNSTYPSNITLNTTTYVNVYNIFSDKNVYLPNENVTIFANITDPIGSYDISGANITVYYPNGSVYINSSMLLQEIDKNSPSLWKLYNYSFSLPESGKYLITITGIESNGVISKKNYTIYCGYEIQGYVKEDFGTLGKEDSEDKGIYGVNVSLLEDSNNDGIPDIGDTIVNSTTTDIFGHYSFLVYNSSKTYFVVVNSRTVGTTRGLNPQYSKNDIWAEETYQTVYTPINSSQWIANGNASIFPDKLLLTTDDYGEAGSVWYYKPVNLSEDLVVEFYAYLGDNPDGADGITFTLQSLGTNELGGTGGDLGYGGISPSVAVEVDTWLNDFDAPATTDHIAIDVNGNINHTYNSLTYPTPNPYDLGNVEDGREHLIKIVWNATTKTLQVYFDGNLSLTWNKDITQIIGNSAYFGFTGGTGGAKNLQYVKPIYVKNGDGYIINPTYGVVEMFGGRDPNEEDNWEDGKYEHYCLINLNSYSGKNITFGFSFDVITNTKSTGQGSFSQFIKNANAIYGKDESYFRIPNIDAKNGNHYIYTSGNKILDNLTIVNGSTQINGTIILSGLQWIANGNAYINNSNNLTLILTPDDYNQKGSVWYYKPVNLSEDLVVEFYAYLGDNPDGADGITFTLQSLGTNELGGTGGDLGYGGISPSVAVEVDTWLNDFDSPATTDHIAIDVDGNLNHTYNSLTYSTPNPYDLGNVEDGREHLIKIVWNATTKTLQVYFDGNLALTWNKDITQIIGNSTYFGFTGGTGGAKNLQYVKPTYVKNGDNVLNLEEISPNPIIDNVGADTYIGNIFFENVSVGILGNETGLNNLTLKSCGIYGKILNAGVKLVDYDWSLQNYPLYIDNLTINASGGYGISMLNKIWAMLYNSQISLKNGVGIYWANWAGGFGNITIYNITISSCNQGLVLYKDGNGIKLINSQIKNSVYEGVYSKNSTLEILNSSIINNSIGIYANISSILVNNSLIYKNRYEGLLLENSSSSILNSNIMNNSIGIYLKENYISKIQKSNISYNAYGIEIVNSSNVYINSSNIFNASTDGIAIFNGENVSVENSLLYNNNYSILSYGNLSNLSVLNSLLRDSINNSIDIEVPSDGFLNNLKLYNSSVLNSGSYGLFIYSLGSASNVNISKSLINGSYKDGIYIYGVNAINIVNNNITNNGLIGGDPAGSGIKISGNYTKGVLILNNNISHNLGNGISLEGLWSRTLCDVKVENNIISNNGIEENSGNGIYIGGRVENVSIFNNTIQYSDAQAILIQEANGWNSWDWIGTNISIINNTIQYNGLTVTIGNITAGITVGAYGVYNQDNGYIIIEGNKIINNNLCPNPTYGGKVGGIEVYGLNESWISLEFNISKNIIANNSAYGILIGASKDINIINNTIFNNEKGITIPNWDFVPYNIIISKNSIYNNSLLGIDLDDDNVTLNDGLLNYNEANHGIDYPIITYAELNGDNLTVKGYIGNGTGSSNFANAVVEIYLVKNLSGGDNLIGNNISSDGTVLNDTYGESWIYLGSLIADSNGFFSGTINVSGKGVGDESLLTATATIKGIGTSEFGRNYLLIKKFFNITGTIVMLPNGYNITIKSYNTTRDVYVYWYKPDNIEVINISGDYDENGTYGNTYWFKFNVINANETMNISITTNITTVEGLIIGIDPKK.

The chain crosses the membrane as a helical span at residues 8–28 (ISIFVFTILLLSNVSLGLNVS). PbH1 repeat units follow at residues 543-567 (EVRW…DISL), 2085-2107 (NYPL…SMLN), 2135-2156 (FGNI…VLYK), 2158-2180 (GNGI…YSKN), 2201-2223 (ISSI…LLEN), 2224-2244 (SSSS…YLKE), 2245-2266 (NYIS…EIVN), 2267-2289 (SSNV…AIFN), 2290-2311 (GENV…LSYG), 2341-2363 (LNNL…FIYS), 2367-2389 (ASNV…YIYG), 2390-2419 (VNAI…KISG), 2422-2444 (TKGV…SLEG), 2455-2477 (VENN…YIGG), 2479-2501 (VENV…LIQE), 2512-2542 (GTNI…TVGA), 2550-2582 (NGYI…EVYG), 2589-2611 (SLEF…LIGA), 2612-2633 (SKDI…TIPN), and 2638-2660 (PYNI…DLDD).

Its subcellular location is the membrane. This is an uncharacterized protein from Methanocaldococcus jannaschii (strain ATCC 43067 / DSM 2661 / JAL-1 / JCM 10045 / NBRC 100440) (Methanococcus jannaschii).